Reading from the N-terminus, the 504-residue chain is Peptidyl-prolyl cis-trans isomerase CYP57 (504 aa).

An N-acetylserine modification is found at serine 2. In terms of domain architecture, PPIase cyclophilin-type spans 16-167 (IVNTTHGPID…DPAPKILSVE (152 aa)). Residues 204–274 (NLLSFGEEAE…AKKEAAQKDK (71 aa)) adopt a coiled-coil conformation. Basic and acidic residues-rich tracts occupy residues 237-275 (RLLKAEASDKERNASESKEVLSVREALNAKKEAAQKDKS), 344-354 (EDEKPRMEKLS), and 364-374 (AKAEHMEKGDT). 3 disordered regions span residues 237-374 (RLLK…KGDT), 416-441 (AKPFTSSNEPVVLTSSSEPVDNKEED), and 482-504 (EKFNRMQAKQKRREREWSGKSLA). The segment covering 416-434 (AKPFTSSNEPVVLTSSSEP) has biased composition (polar residues). The segment covering 494–504 (REREWSGKSLA) has biased composition (basic and acidic residues).

The protein belongs to the cyclophilin-type PPIase family. Ubiquitous.

It localises to the nucleus. It is found in the cytoplasm. The catalysed reaction is [protein]-peptidylproline (omega=180) = [protein]-peptidylproline (omega=0). In terms of biological role, PPIases accelerate the folding of proteins. It catalyzes the cis-trans isomerization of proline imidic peptide bonds in oligopeptides. Involved in plant response to pathogen infection by increasing PAD4 expression in absence of EDS1 up-regulation. This is Peptidyl-prolyl cis-trans isomerase CYP57 (CYP57) from Arabidopsis thaliana (Mouse-ear cress).